A 138-amino-acid chain; its full sequence is Cysteine desulfuration protein SufE (138 aa).

The Cysteine persulfide intermediate role is filled by Cys-51.

Belongs to the SufE family. As to quaternary structure, homodimer. Interacts with SufS.

Its subcellular location is the cytoplasm. It functions in the pathway cofactor biosynthesis; iron-sulfur cluster biosynthesis. In terms of biological role, participates in cysteine desulfuration mediated by SufS. Cysteine desulfuration mobilizes sulfur from L-cysteine to yield L-alanine and constitutes an essential step in sulfur metabolism for biosynthesis of a variety of sulfur-containing biomolecules. Functions as a sulfur acceptor for SufS, by mediating the direct transfer of the sulfur atom from the S-sulfanylcysteine of SufS, an intermediate product of cysteine desulfuration process. The sequence is that of Cysteine desulfuration protein SufE from Photorhabdus laumondii subsp. laumondii (strain DSM 15139 / CIP 105565 / TT01) (Photorhabdus luminescens subsp. laumondii).